We begin with the raw amino-acid sequence, 331 residues long: Phenylalanine--tRNA ligase alpha subunit (331 aa).

Glu-252 contributes to the Mg(2+) binding site.

It belongs to the class-II aminoacyl-tRNA synthetase family. Phe-tRNA synthetase alpha subunit type 1 subfamily. In terms of assembly, tetramer of two alpha and two beta subunits. Mg(2+) is required as a cofactor.

It is found in the cytoplasm. The enzyme catalyses tRNA(Phe) + L-phenylalanine + ATP = L-phenylalanyl-tRNA(Phe) + AMP + diphosphate + H(+). The protein is Phenylalanine--tRNA ligase alpha subunit of Xanthomonas axonopodis pv. citri (strain 306).